Consider the following 146-residue polypeptide: UPF0306 protein CKO_04548 (146 aa).

It belongs to the UPF0306 family.

This is UPF0306 protein CKO_04548 from Citrobacter koseri (strain ATCC BAA-895 / CDC 4225-83 / SGSC4696).